The following is a 194-amino-acid chain: Fe/S biogenesis protein NfuA (194 aa).

[4Fe-4S] cluster-binding residues include Cys-152 and Cys-155.

Belongs to the NfuA family. In terms of assembly, homodimer. It depends on [4Fe-4S] cluster as a cofactor.

In terms of biological role, involved in iron-sulfur cluster biogenesis. Binds a 4Fe-4S cluster, can transfer this cluster to apoproteins, and thereby intervenes in the maturation of Fe/S proteins. Could also act as a scaffold/chaperone for damaged Fe/S proteins. In Stutzerimonas stutzeri (strain A1501) (Pseudomonas stutzeri), this protein is Fe/S biogenesis protein NfuA.